We begin with the raw amino-acid sequence, 259 residues long: Early E4 30 kDa protein (259 aa).

The protein belongs to the adenoviridae E4 30 to 34 kDa protein family. Interacts with E1B-55k.

The protein resides in the host nucleus. It is found in the host cytoplasm. Its function is as follows. Plays a major role to prevent cellular inhibition of viral genome replication by nuclear bodies. Assembles an SCF-like E3 ubiquitin ligase complex based on the cellular proteins ELOB, ELOC, CUL5 and RBX1, in cooperation with viral E1B-55K. This viral RING-type ligase ubiquitinates cellular substrates prior to proteasomal degradation: p53/TP53, LIG4, MRE11-RAD50-NBS1 (MRN) complex, ITGA3, DAXX and BLM. The chain is Early E4 30 kDa protein from Canine adenovirus serotype 2 (strain Toronto A 26-61) (CAdV-2).